Consider the following 94-residue polypeptide: Integration host factor subunit beta (94 aa).

It belongs to the bacterial histone-like protein family. Heterodimer of an alpha and a beta chain.

Its function is as follows. This protein is one of the two subunits of integration host factor, a specific DNA-binding protein that functions in genetic recombination as well as in transcriptional and translational control. The polypeptide is Integration host factor subunit beta (Haemophilus influenzae (strain PittGG)).